Reading from the N-terminus, the 480-residue chain is UDP-glucose 6-dehydrogenase 3 (480 aa).

Residues 8 to 13 (GAGYVG), Asp-33, Arg-38, 86 to 90 (VNTPT), 127 to 128 (ST), and Glu-161 contribute to the NAD(+) site. Substrate is bound by residues 157–161 (EFLAE), 216–223 (KLAANAFL), and 256–269 (RIGP…VGFG). Catalysis depends on Cys-272, which acts as the Nucleophile. An NAD(+)-binding site is contributed by 272-275 (CFQK). 334 to 335 (FK) contributes to the substrate binding site. Arg-342 contributes to the NAD(+) binding site. A substrate-binding site is contributed by Arg-447.

Belongs to the UDP-glucose/GDP-mannose dehydrogenase family.

It catalyses the reaction UDP-alpha-D-glucose + 2 NAD(+) + H2O = UDP-alpha-D-glucuronate + 2 NADH + 3 H(+). It functions in the pathway nucleotide-sugar biosynthesis; UDP-alpha-D-glucuronate biosynthesis; UDP-alpha-D-glucuronate from UDP-alpha-D-glucose: step 1/1. With respect to regulation, inhibited by UDP-xylose. Its function is as follows. Involved in the biosynthesis of UDP-glucuronic acid (UDP-GlcA), providing nucleotide sugars for cell-wall polymers. Required for the formation of cell wall ingrowths on the outer cell walls of nematode-induced syncytia. The polypeptide is UDP-glucose 6-dehydrogenase 3 (UGD3) (Arabidopsis thaliana (Mouse-ear cress)).